The following is a 146-amino-acid chain: Probable transporter XF_0765 (146 aa).

The next 4 helical transmembrane spans lie at 9 to 29, 46 to 66, 91 to 111, and 116 to 136; these read FTVALAAGLLFGFGLALSEMI, NPSLLFVLGSALAVAFPGMAL, IVFGSAIFGTGWGLTGLCPGP, and LSTGLGPVLLFVAAMAAGMII.

The protein belongs to the TsuA/YedE (TC 9.B.102) family.

It localises to the cell inner membrane. The protein is Probable transporter XF_0765 of Xylella fastidiosa (strain 9a5c).